Reading from the N-terminus, the 345-residue chain is Trace amine-associated receptor 6 (345 aa).

Topologically, residues 1-32 (MSSNSSLLVAVQLCYANVNGSCVKIPFSPGSR) are extracellular. Residues asparagine 4 and asparagine 19 are each glycosylated (N-linked (GlcNAc...) asparagine). 2 disulfide bridges follow: cysteine 22–cysteine 186 and cysteine 105–cysteine 190. A helical membrane pass occupies residues 33 to 53 (VILYIVFGFGAVLAVFGNLLV). Over 54-68 (MISILHFKQLHSPTN) the chain is Cytoplasmic. The helical transmembrane segment at 69–89 (FLVASLACADFLVGVTVMPFS) threads the bilayer. Residues 90 to 107 (MVRTVESCWYFGRSFCTF) are Extracellular-facing. The helical transmembrane segment at 108-128 (HTCCDVAFCYSSLFHLCFISI) threads the bilayer. The Cytoplasmic segment spans residues 129-147 (DRYIAVTDPLVYPTKFTVS). The helical transmembrane segment at 148-168 (VSGICISVSWILPLMYSGAVF) threads the bilayer. The Extracellular portion of the chain corresponds to 169 to 202 (YTGVYDDGLEELSDALNCIGGCQTVVNQNWVLTD). A helical membrane pass occupies residues 203–223 (FLSFFIPTFIMIILYGNIFLV). At 224–259 (ARRQAKKIENTGSKTESSSESYKARVARRERKAAKT) the chain is on the cytoplasmic side. Residues 260 to 276 (LGVTVVAFMISWLPYSI) traverse the membrane as a helical segment. The Extracellular portion of the chain corresponds to 277 to 282 (DSLIDA). A helical transmembrane segment spans residues 283-302 (FMGFITPACIYEICCWCAYY). At 303–345 (NSAMNPLIYALFYPWFRKAIKVIVTGQVLKNSSATMNLFSEHI) the chain is on the cytoplasmic side.

It belongs to the G-protein coupled receptor 1 family. Expressed at low abundance in various brain tissues, as well as in fetal liver, but not in the cerebellum or placenta. In the brain, comparable levels of expression in basal ganglia, frontal cortex, substantia nigra, amygdala and hippocampus, highest expression in hippocampus and lowest expression in basal ganglia.

The protein resides in the cell membrane. Its function is as follows. Olfactory receptor specific for trace amines, such as beta-phenylethylamine (beta-PEA). Trace amine compounds are enriched in animal body fluids and act on trace amine-associated receptors (TAARs) to elicit both intraspecific and interspecific innate behaviors. Beta-PEA-binding causes a conformation change that triggers signaling via G(s)-class of G alpha proteins (GNAL or GNAS). This chain is Trace amine-associated receptor 6, found in Homo sapiens (Human).